We begin with the raw amino-acid sequence, 326 residues long: Porin-like protein H (326 aa).

A signal peptide spans 1 to 19; it reads MKKTLVALAILTAAGSANA.

It belongs to the Gram-negative porin family. In terms of assembly, oligomer.

It is found in the cell outer membrane. Its function is as follows. Forms pores that allow passive diffusion of small molecules across the outer membrane. The chain is Porin-like protein H (ompH) from Photobacterium profundum (strain SS9).